The chain runs to 231 residues: NADH-ubiquinone oxidoreductase chain 4 (231 aa).

6 consecutive transmembrane segments (helical) span residues 1-21, 34-54, 63-85, 89-111, 128-148, and 169-189; these read PIAG…YGII, MFLP…LTCL, IAYS…TPWG, ALAL…NTTY, ILPM…AIPP, and TIIM…HMFL.

It belongs to the complex I subunit 4 family.

It is found in the mitochondrion membrane. It catalyses the reaction a ubiquinone + NADH + 5 H(+)(in) = a ubiquinol + NAD(+) + 4 H(+)(out). Core subunit of the mitochondrial membrane respiratory chain NADH dehydrogenase (Complex I) that is believed to belong to the minimal assembly required for catalysis. Complex I functions in the transfer of electrons from NADH to the respiratory chain. The immediate electron acceptor for the enzyme is believed to be ubiquinone. The polypeptide is NADH-ubiquinone oxidoreductase chain 4 (MT-ND4) (Bothrocophias hyoprora (Amazonian hognose viper)).